We begin with the raw amino-acid sequence, 449 residues long: tRNA-2-methylthio-N(6)-dimethylallyladenosine synthase (449 aa).

The MTTase N-terminal domain maps to 3-124; sequence KMLYIKTYGC…LPTMLEKLDS (122 aa). Cysteine 12, cysteine 48, cysteine 87, cysteine 163, cysteine 167, and cysteine 170 together coordinate [4Fe-4S] cluster. Residues 149 to 380 form the Radical SAM core domain; the sequence is KSPTVSGLVS…QAQLMQQQLE (232 aa). A TRAM domain is found at 383–447; sequence QKLIGKVVPV…ASSLFGEVYA (65 aa).

It belongs to the methylthiotransferase family. MiaB subfamily. Monomer. [4Fe-4S] cluster serves as cofactor.

The protein localises to the cytoplasm. The catalysed reaction is N(6)-dimethylallyladenosine(37) in tRNA + (sulfur carrier)-SH + AH2 + 2 S-adenosyl-L-methionine = 2-methylsulfanyl-N(6)-dimethylallyladenosine(37) in tRNA + (sulfur carrier)-H + 5'-deoxyadenosine + L-methionine + A + S-adenosyl-L-homocysteine + 2 H(+). Catalyzes the methylthiolation of N6-(dimethylallyl)adenosine (i(6)A), leading to the formation of 2-methylthio-N6-(dimethylallyl)adenosine (ms(2)i(6)A) at position 37 in tRNAs that read codons beginning with uridine. The chain is tRNA-2-methylthio-N(6)-dimethylallyladenosine synthase from Orientia tsutsugamushi (strain Ikeda) (Rickettsia tsutsugamushi).